Consider the following 649-residue polypeptide: Pesticidal crystal protein Cry3Ca (649 aa).

The span at 1–13 shows a compositional bias: basic and acidic residues; it reads MNPNNRSEHDTIK. Positions 1–29 are disordered; the sequence is MNPNNRSEHDTIKATENNEVSNNHAQYPL. Residues 14 to 25 are compositionally biased toward polar residues; that stretch reads ATENNEVSNNHA.

It belongs to the delta endotoxin family.

In terms of biological role, promotes colloidosmotic lysis by binding to the midgut epithelial cells of Coleoptera. This chain is Pesticidal crystal protein Cry3Ca (cry3Ca), found in Bacillus thuringiensis subsp. kurstaki.